The chain runs to 121 residues: Small ribosomal subunit protein bS6 (121 aa).

The interval 94 to 121 is disordered; the sequence is KAETGPSAVMKRVEKEEARKSSQQETAA. Residues 104–115 are compositionally biased toward basic and acidic residues; the sequence is KRVEKEEARKSS.

The protein belongs to the bacterial ribosomal protein bS6 family.

Its function is as follows. Binds together with bS18 to 16S ribosomal RNA. This chain is Small ribosomal subunit protein bS6, found in Leptothrix cholodnii (strain ATCC 51168 / LMG 8142 / SP-6) (Leptothrix discophora (strain SP-6)).